The following is an 803-amino-acid chain: Volume-regulated anion channel subunit LRRC8C (803 aa).

Topologically, residues 1 to 22 are cytoplasmic; that stretch reads MIPVTEFRQFSEQQPAFRVLKP. The helical transmembrane segment at 23–48 threads the bilayer; sequence WWDVFTDYLSVAMLMIGVFGCTLQVM. Residues 49–124 lie on the Extracellular side of the membrane; sequence QDKIICLPKR…CYERALHWYA (76 aa). Intrachain disulfides connect cysteine 54–cysteine 308 and cysteine 115–cysteine 293. Residues 125 to 144 form a helical membrane-spanning segment; the sequence is KYFPYLVLIHTLVFMLCSNF. The Cytoplasmic segment spans residues 145–262; it reads WFKFPGSSSK…EEGDILYAMY (118 aa). The interval 177-206 is disordered; it reads EVSGEDSEEKDNRKNNMNRSGTIQSGPEGN. Over residues 191-206 the composition is skewed to polar residues; sequence NNMNRSGTIQSGPEGN. Serine 212 and serine 215 each carry phosphoserine. A helical membrane pass occupies residues 263–284; the sequence is VRQTVLKVIKFLIIIAYNSALV. Over 285-314 the chain is Extracellular; sequence SKVQFTVDCNVDIQDMTGYKNFSCNHTMAH. Residues 315 to 339 traverse the membrane as a helical segment; it reads LFSKLSFCYLCFVSIYGLTCLYTLY. The Cytoplasmic segment spans residues 340 to 803; that stretch reads WLFYRSLREY…SDVREQMKAD (464 aa). LRR repeat units lie at residues 409 to 420, 421 to 443, 446 to 466, 467 to 488, 490 to 513, 515 to 537, 541 to 563, 566 to 586, 588 to 611, 613 to 635, 637 to 659, 660 to 682, 684 to 705, 706 to 728, 730 to 751, 752 to 774, and 776 to 799; these read WTPDKLRQKLQT, NAHN…VFEI, LQSL…IAQL, DNLQ…ALSF, KENL…MYGL, NLEE…TLES, LKSL…VVDV, HLQK…NNLK, MTNL…VFSL, SLQE…SFQH, RKLT…IKKL, TSLE…LFLC, KIRY…IGVL, QSLQ…LYFC, KLKT…IGNL, LFLS…LGDC, and ALKR…VREQ.

It belongs to the LRRC8 family. Heterohexamer; oligomerizes with other LRRC8 proteins (LRRC8A, LRRC8B, LRRC8D and/or LRRC8E) to form a heterohexamer. Homoheptamer; inactive, likely because it is not targeted to the plasma membrane in the absence of LRRC8A. In vivo, the subunit composition may depend primarily on expression levels, and heterooligomeric channels containing various proportions of the different LRRC8 proteins may coexist. In terms of tissue distribution, expressed at very low levels in adipose tissue.

The protein localises to the cell membrane. It is found in the endoplasmic reticulum membrane. It catalyses the reaction chloride(in) = chloride(out). The catalysed reaction is iodide(out) = iodide(in). The enzyme catalyses taurine(out) = taurine(in). It carries out the reaction 2',3'-cGAMP(out) = 2',3'-cGAMP(in). Non-essential component of the volume-regulated anion channel (VRAC, also named VSOAC channel), an anion channel required to maintain a constant cell volume in response to extracellular or intracellular osmotic changes. The VRAC channel conducts iodide better than chloride and can also conduct organic osmolytes like taurine. Plays a redundant role in the efflux of amino acids, such as aspartate and glutamate, in response to osmotic stress. The VRAC channel also mediates transport of immunoreactive cyclic dinucleotide GMP-AMP (2'-3'-cGAMP), an immune messenger produced in response to DNA virus in the cytosol. Channel activity requires LRRC8A plus at least one other family member (LRRC8B, LRRC8C, LRRC8D or LRRC8E); channel characteristics depend on the precise subunit composition. May play a role in adipogenesis. The polypeptide is Volume-regulated anion channel subunit LRRC8C (Mus musculus (Mouse)).